Reading from the N-terminus, the 330-residue chain is tRNA-modifying protein YgfZ (330 aa).

The folate site is built by Trp28 and Trp192.

The protein belongs to the tRNA-modifying YgfZ family.

It localises to the cytoplasm. Its function is as follows. Folate-binding protein involved in regulating the level of ATP-DnaA and in the modification of some tRNAs. It is probably a key factor in regulatory networks that act via tRNA modification, such as initiation of chromosomal replication. This Blochmanniella pennsylvanica (strain BPEN) protein is tRNA-modifying protein YgfZ.